The sequence spans 280 residues: Bifunctional protein FolD (280 aa).

NADP(+) contacts are provided by residues 164-166 (GRS), serine 189, and valine 230.

Belongs to the tetrahydrofolate dehydrogenase/cyclohydrolase family. In terms of assembly, homodimer.

The enzyme catalyses (6R)-5,10-methylene-5,6,7,8-tetrahydrofolate + NADP(+) = (6R)-5,10-methenyltetrahydrofolate + NADPH. The catalysed reaction is (6R)-5,10-methenyltetrahydrofolate + H2O = (6R)-10-formyltetrahydrofolate + H(+). It functions in the pathway one-carbon metabolism; tetrahydrofolate interconversion. Catalyzes the oxidation of 5,10-methylenetetrahydrofolate to 5,10-methenyltetrahydrofolate and then the hydrolysis of 5,10-methenyltetrahydrofolate to 10-formyltetrahydrofolate. The protein is Bifunctional protein FolD of Geotalea uraniireducens (strain Rf4) (Geobacter uraniireducens).